The following is a 259-amino-acid chain: tRNA (guanine-N(1)-)-methyltransferase (259 aa).

Residues G117 and 137-142 each bind S-adenosyl-L-methionine; that span reads LGDFVL.

Belongs to the RNA methyltransferase TrmD family. Homodimer.

It is found in the cytoplasm. It catalyses the reaction guanosine(37) in tRNA + S-adenosyl-L-methionine = N(1)-methylguanosine(37) in tRNA + S-adenosyl-L-homocysteine + H(+). Its function is as follows. Specifically methylates guanosine-37 in various tRNAs. The protein is tRNA (guanine-N(1)-)-methyltransferase of Polaromonas sp. (strain JS666 / ATCC BAA-500).